The sequence spans 426 residues: 5-methylthioadenosine/S-adenosylhomocysteine deaminase (426 aa).

The Zn(2+) site is built by His60 and His62. Positions 89 and 179 each coordinate substrate. Residue His206 participates in Zn(2+) binding. Glu209 and Asp294 together coordinate substrate. Residue Asp294 coordinates Zn(2+).

The protein belongs to the metallo-dependent hydrolases superfamily. MTA/SAH deaminase family. Zn(2+) serves as cofactor.

It catalyses the reaction S-adenosyl-L-homocysteine + H2O + H(+) = S-inosyl-L-homocysteine + NH4(+). It carries out the reaction S-methyl-5'-thioadenosine + H2O + H(+) = S-methyl-5'-thioinosine + NH4(+). Functionally, catalyzes the deamination of 5-methylthioadenosine and S-adenosyl-L-homocysteine into 5-methylthioinosine and S-inosyl-L-homocysteine, respectively. Is also able to deaminate adenosine. The protein is 5-methylthioadenosine/S-adenosylhomocysteine deaminase of Dictyoglomus turgidum (strain DSM 6724 / Z-1310).